The chain runs to 454 residues: Apyrase (454 aa).

Topologically, residues Met-1–His-7 are cytoplasmic. A helical; Signal-anchor for type II membrane protein transmembrane segment spans residues Phe-8 to Val-28. Residues Asn-29–Ser-454 are Extracellular-facing. Val-48–Arg-58 lines the ATP pocket. N-linked (GlcNAc...) asparagine glycosylation occurs at Asn-151. The Proton acceptor role is filled by Glu-170. Ala-194–Gln-204 contributes to the ATP binding site. N-linked (GlcNAc...) asparagine glycosylation occurs at Asn-262.

The protein belongs to the GDA1/CD39 NTPase family. Ca(2+) serves as cofactor. In terms of processing, the N-terminus is blocked.

It localises to the membrane. It carries out the reaction a ribonucleoside 5'-triphosphate + 2 H2O = a ribonucleoside 5'-phosphate + 2 phosphate + 2 H(+). In terms of biological role, catalyzes the hydrolysis of phosphoanhydride bonds of nucleoside tri- and di-phosphates. This chain is Apyrase (RROP1), found in Solanum tuberosum (Potato).